The following is a 914-amino-acid chain: Golgin candidate 6 (914 aa).

2 coiled-coil regions span residues 723 to 837 (IEKQ…SLKG) and 863 to 901 (EDELNDLLVCLGQEESKVEKLSAKLIELGVDVDKLLEDI). A Phosphoserine modification is found at Ser911.

It is found in the golgi apparatus. It localises to the golgi stack. Golgi matrix protein playing a role in tethering of vesicles to Golgi membranes and in maintaining the overall structure of the Golgi apparatus. Functions in the anterograde transport of storage protein precursors from the endoplasmic reticulum (ER) to the Golgi complex. The sequence is that of Golgin candidate 6 (GC6) from Arabidopsis thaliana (Mouse-ear cress).